We begin with the raw amino-acid sequence, 399 residues long: Argininosuccinate synthase (399 aa).

9-17 (AYSGGLDTS) contacts ATP. Tyrosine 88 provides a ligand contact to L-citrulline. Glycine 118 contacts ATP. L-aspartate-binding residues include threonine 120, asparagine 124, and aspartate 125. Position 124 (asparagine 124) interacts with L-citrulline. Positions 128, 176, 261, and 273 each coordinate L-citrulline.

This sequence belongs to the argininosuccinate synthase family. Type 1 subfamily. As to quaternary structure, homotetramer.

Its subcellular location is the cytoplasm. It catalyses the reaction L-citrulline + L-aspartate + ATP = 2-(N(omega)-L-arginino)succinate + AMP + diphosphate + H(+). It participates in amino-acid biosynthesis; L-arginine biosynthesis; L-arginine from L-ornithine and carbamoyl phosphate: step 2/3. The sequence is that of Argininosuccinate synthase from Mycobacterium leprae (strain TN).